The sequence spans 274 residues: Pyridoxal phosphate homeostasis protein (274 aa).

At serine 6 the chain carries Phosphoserine. Lysine 47 carries the post-translational modification N6-(pyridoxal phosphate)lysine. Tyrosine 69 is modified (phosphotyrosine). Position 125 is an N6-succinyllysine (lysine 125). Phosphoserine is present on residues serine 226 and serine 244.

It belongs to the pyridoxal phosphate-binding protein YggS/PROSC family.

Functionally, pyridoxal 5'-phosphate (PLP)-binding protein, which may be involved in intracellular homeostatic regulation of pyridoxal 5'-phosphate (PLP), the active form of vitamin B6. The protein is Pyridoxal phosphate homeostasis protein of Mus musculus (Mouse).